The chain runs to 216 residues: Penicillin-binding protein activator LpoB (216 aa).

Residues 1–20 (MIKNLSRYALVTAFALFLSG) form the signal peptide. The N-palmitoyl cysteine moiety is linked to residue cysteine 21. Cysteine 21 carries S-diacylglycerol cysteine lipidation. The interval 28 to 77 (QPAPVDEAKPGTEQPAQPTQPVPTVPSVPTVPAQPGPIEHPDQTSQPAPR) is disordered.

The protein belongs to the LpoB family. As to quaternary structure, interacts with PBP1b.

The protein resides in the cell outer membrane. Functionally, regulator of peptidoglycan synthesis that is essential for the function of penicillin-binding protein 1B (PBP1b). The polypeptide is Penicillin-binding protein activator LpoB (Enterobacter sp. (strain 638)).